We begin with the raw amino-acid sequence, 100 residues long: Large ribosomal subunit protein uL23 (100 aa).

It belongs to the universal ribosomal protein uL23 family. In terms of assembly, part of the 50S ribosomal subunit. Contacts protein L29, and trigger factor when it is bound to the ribosome.

One of the early assembly proteins it binds 23S rRNA. One of the proteins that surrounds the polypeptide exit tunnel on the outside of the ribosome. Forms the main docking site for trigger factor binding to the ribosome. In Thermotoga neapolitana (strain ATCC 49049 / DSM 4359 / NBRC 107923 / NS-E), this protein is Large ribosomal subunit protein uL23.